Consider the following 503-residue polypeptide: T-complex protein 11 homolog (503 aa).

Residues 1 to 22 (MPDVKESVPPKYPGDSEGRSCK) are compositionally biased toward basic and acidic residues. Disordered regions lie at residues 1–42 (MPDV…PPPF) and 254–285 (DLTM…NPEP). Positions 263 to 285 (PDTSDSSSVAGPSPNEAANNPEP) are enriched in low complexity. The helical transmembrane segment at 330–349 (LTVMASVLLVASSFSGSVLF) threads the bilayer.

This sequence belongs to the TCP11 family. Found in a complex at least composed of MROH2B, PRKACA isoform 2 and TCP11. Interacts with MROH2B. Interacts with PRKACA isoform 2. Isoform 2 and isoform 3 interact with ODF1 (via leucine zipper motif). Post-translationally, constitutively phosphorylated on serine, threonine and tyrosine residues within the head and tail regions of noncapacitated spermatozoa. Phosphorylation on tyrosine residues increases upon sperm capacitation within the acrosomal region in a protein kinase A (PKA)-dependent signaling pathway. In terms of tissue distribution, isoform 2 and isoform 3 are expressed in sperm. Isoform 1 is not detected in sperm (at protein level). Testis-specific. Isoform 1, isoform 2 and isoform 3 are expressed in sperm.

It localises to the membrane. The protein localises to the cell projection. It is found in the cilium. Its subcellular location is the flagellum. The protein resides in the cytoplasmic vesicle. It localises to the secretory vesicle. The protein localises to the acrosome. In terms of biological role, plays a role in the process of sperm capacitation and acrosome reactions. Probable receptor for the putative fertilization-promoting peptide (FPP) at the sperm membrane that may modulate the activity of the adenylyl cyclase cAMP pathway. This chain is T-complex protein 11 homolog (TCP11), found in Homo sapiens (Human).